Reading from the N-terminus, the 44-residue chain is Thymosin beta-4 (44 aa).

2 stretches are compositionally biased toward basic and acidic residues: residues 1–25 and 33–44; these read MSDKPDMAEIEKFDKAKLKKTETQE and ETIEQEKQTSES. A disordered region spans residues 1-44; it reads MSDKPDMAEIEKFDKAKLKKTETQEKNPLPSKETIEQEKQTSES. The residue at position 2 (Ser2) is an N-acetylserine.

This sequence belongs to the thymosin beta family. As to expression, spleen, kidney, heart, and oocytes.

Its subcellular location is the cytoplasm. The protein resides in the cytoskeleton. In terms of biological role, plays an important role in the organization of the cytoskeleton. Binds to and sequesters actin monomers (G actin) and therefore inhibits actin polymerization. This is Thymosin beta-4 (tmsb4) from Xenopus laevis (African clawed frog).